The primary structure comprises 1064 residues: MKIATVSVLLPLALCLIQDAASKNEDQEMCHEFQAFMKNGKLFCPQDKKFFQSLDGIMFINKCATCKMILEKEAKSQKRARHLARAPKATAPTELNCDDFKKGERDGDFICPDYYEAVCGTDGKTYDNRCALCAENAKTGSQIGVKSEGECKSSNPEQDVCSAFRPFVRDGRLGCTRENDPVLGPDGKTHGNKCAMCAELFLKEAENAKREGETRIRRNAEKDFCKEYEKQVRNGRLFCTRESDPVRGPDGRMHGNKCALCAEIFKQRFSEENSKTDQNLGKAEEKTKVKREIVKLCSQYQNQAKNGILFCTRENDPIRGPDGKMHGNLCSMCQAYFQAENEEKKKAEARARNKRESGKATSYAELCSEYRKLVRNGKLACTRENDPIQGPDGKVHGNTCSMCEVFFQAEEEEKKKKEGKSRNKRQSKSTASFEELCSEYRKSRKNGRLFCTRENDPIQGPDGKMHGNTCSMCEAFFQQEERARAKAKREAAKEICSEFRDQVRNGTLICTREHNPVRGPDGKMHGNKCAMCASVFKLEEEEKKNDKEEKGKVEAEKVKREAVQELCSEYRHYVRNGRLPCTRENDPIEGLDGKIHGNTCSMCEAFFQQEAKEKERAEPRAKVKREAEKETCDEFRRLLQNGKLFCTRENDPVRGPDGKTHGNKCAMCKAVFQKENEERKRKEEEDQRNAAGHGSSGGGGGNTQDECAEYREQMKNGRLSCTRESDPVRDADGKSYNNQCTMCKAKLEREAERKNEYSRSRSNGTGSESGKDTCDEFRSQMKNGKLICTRESDPVRGPDGKTHGNKCTMCKEKLEREAAEKKKKEDEDRSNTGERSNTGERSNDKEDLCREFRSMQRNGKLICTRENNPVRGPYGKMHINKCAMCQSIFDREANERKKKDEEKSSSKPSNNAKDECSEFRNYIRNNELICPRENDPVHGADGKFYTNKCYMCRAVFLTEALERAKLQEKPSHVRASQEEDSPDSFSSLDSEMCKDYRVLPRIGYLCPKDLKPVCGDDGQTYNNPCMLCHENLIRQTNTHIRSTGKCEESSTPGTTAASMPPSDE.

A signal peptide spans M1–S22. One can recognise a Kazal-like 1; atypical domain in the interval E28–C66. Intrachain disulfides connect C30/C66, C44/C63, C97/C133, C111/C130, C119/C151, C161/C197, C175/C194, C225/C261, C239/C258, C297/C333, C311/C330, C367/C403, C381/C400, C437/C473, C451/C470, C496/C532, C510/C529, C567/C603, C581/C600, C632/C668, and C646/C665. 14 Kazal-like domains span residues A91–S153, N155–I216, N219–E285, R291–R352, T361–N423, A431–R489, E490–G551, E561–K622, E626–R688, G701–Y757, E768–S830, N843–S905, N910–S971, and S987–E1048. Residues N676–R688 are compositionally biased toward basic and acidic residues. The disordered stretch occupies residues N676–D705. 6 disulfides stabilise this stretch: C707/C743, C721/C740, C774/C810, C788/C807, C849/C885, and C863/C882. The disordered stretch occupies residues A751 to D775. The segment at A818 to C849 is disordered. Residues E895 to S905 show a composition bias toward basic and acidic residues. Positions E895–E915 are disordered. Intrachain disulfides connect C916–C952 and C930–C949. Residues Q967–Q977 show a composition bias toward basic and acidic residues. The interval Q967–S987 is disordered. 3 disulfides stabilise this stretch: C993–C1028, C1006–C1025, and C1014–C1046. The disordered stretch occupies residues R1041–E1064.

In terms of processing, proteolytically processed by furin in individual domains (D1, D5, D6, D8 through D11, and D9 through D15) exhibiting various inhibitory potentials for multiple proteases. In terms of tissue distribution, highly expressed in the thymus and stratum corneum. Also found in the oral mucosa, parathyroid gland, Bartholin's glands, tonsils, and vaginal epithelium. Very low levels are detected in lung, kidney, and prostate.

The protein resides in the secreted. In terms of biological role, serine protease inhibitor, probably important for the anti-inflammatory and/or antimicrobial protection of mucous epithelia. Contribute to the integrity and protective barrier function of the skin by regulating the activity of defense-activating and desquamation-involved proteases. Inhibits KLK5, it's major target, in a pH-dependent manner. Inhibits KLK7, KLK14 CASP14, and trypsin. The polypeptide is Serine protease inhibitor Kazal-type 5 (SPINK5) (Homo sapiens (Human)).